A 316-amino-acid polypeptide reads, in one-letter code: Glutathione synthetase (316 aa).

An ATP-grasp domain is found at 125 to 310; sequence KLFTAWFSDL…ITGMLMDAIE (186 aa). An ATP-binding site is contributed by 151 to 207; it reads WEKHSDIILKPLDGMGGASIFRVKEGDPNLGVIAETLTEHGTRYCMAQNYLPAIKDG. The Mg(2+) site is built by glutamate 281 and asparagine 283.

This sequence belongs to the prokaryotic GSH synthase family. Requires Mg(2+) as cofactor. Mn(2+) serves as cofactor.

It carries out the reaction gamma-L-glutamyl-L-cysteine + glycine + ATP = glutathione + ADP + phosphate + H(+). The protein operates within sulfur metabolism; glutathione biosynthesis; glutathione from L-cysteine and L-glutamate: step 2/2. This Escherichia coli O6:H1 (strain CFT073 / ATCC 700928 / UPEC) protein is Glutathione synthetase.